We begin with the raw amino-acid sequence, 96 residues long: Putative pterin-4-alpha-carbinolamine dehydratase (96 aa).

It belongs to the pterin-4-alpha-carbinolamine dehydratase family.

It carries out the reaction (4aS,6R)-4a-hydroxy-L-erythro-5,6,7,8-tetrahydrobiopterin = (6R)-L-erythro-6,7-dihydrobiopterin + H2O. This chain is Putative pterin-4-alpha-carbinolamine dehydratase, found in Prochlorococcus marinus (strain MIT 9303).